The chain runs to 303 residues: D-alanine--D-alanine ligase (303 aa).

The ATP-grasp domain maps to 100 to 295 (KQLLRRHGIL…FPALIARLIE (196 aa)). Residue 127-180 (GLGYPLFVKPNTGGSSLCLSRVTQPEGLAPALEAVFAHCGEAIVEPAIPGVEVT) participates in ATP binding. Mg(2+)-binding residues include D249, E262, and N264.

Belongs to the D-alanine--D-alanine ligase family. Mg(2+) serves as cofactor. Requires Mn(2+) as cofactor.

The protein resides in the cytoplasm. The catalysed reaction is 2 D-alanine + ATP = D-alanyl-D-alanine + ADP + phosphate + H(+). The protein operates within cell wall biogenesis; peptidoglycan biosynthesis. Its function is as follows. Cell wall formation. This chain is D-alanine--D-alanine ligase, found in Nitratidesulfovibrio vulgaris (strain DP4) (Desulfovibrio vulgaris).